The following is a 391-amino-acid chain: UPF0229 protein BAA_0633 (391 aa).

The span at 1–16 shows a compositional bias: polar residues; sequence MGEENQPNYTISQENW. 2 disordered regions span residues 1-31 and 80-117; these read MGEENQPNYTISQENWSLHRKGYDDQQRHQE and HVGQGNGDSKVGDVVARDGSGGQKQKGPGKGQGAGDAA. Residues 21–31 are compositionally biased toward basic and acidic residues; sequence KGYDDQQRHQE. A compositionally biased stretch (gly residues) spans 98–115; sequence GSGGQKQKGPGKGQGAGD.

This sequence belongs to the UPF0229 family.

This chain is UPF0229 protein BAA_0633, found in Bacillus anthracis (strain A0248).